The primary structure comprises 207 residues: Proteasome subunit beta (207 aa).

A propeptide spans 1-9 (MSNKNTFEG) (removed in mature form; by autocatalysis). Threonine 10 functions as the Nucleophile in the catalytic mechanism.

This sequence belongs to the peptidase T1B family. In terms of assembly, the 20S proteasome core is composed of 14 alpha and 14 beta subunits that assemble into four stacked heptameric rings, resulting in a barrel-shaped structure. The two inner rings, each composed of seven catalytic beta subunits, are sandwiched by two outer rings, each composed of seven alpha subunits. The catalytic chamber with the active sites is on the inside of the barrel. Has a gated structure, the ends of the cylinder being occluded by the N-termini of the alpha-subunits. Is capped at one or both ends by the proteasome regulatory ATPase, PAN.

Its subcellular location is the cytoplasm. The catalysed reaction is Cleavage of peptide bonds with very broad specificity.. The formation of the proteasomal ATPase PAN-20S proteasome complex, via the docking of the C-termini of PAN into the intersubunit pockets in the alpha-rings, triggers opening of the gate for substrate entry. Interconversion between the open-gate and close-gate conformations leads to a dynamic regulation of the 20S proteasome proteolysis activity. Functionally, component of the proteasome core, a large protease complex with broad specificity involved in protein degradation. The sequence is that of Proteasome subunit beta from Methanobrevibacter ruminantium (strain ATCC 35063 / DSM 1093 / JCM 13430 / OCM 146 / M1) (Methanobacterium ruminantium).